The sequence spans 248 residues: Proteasome subunit alpha type-5 (248 aa).

This sequence belongs to the peptidase T1A family. The 26S proteasome consists of a 20S proteasome core and two 19S regulatory subunits. The 20S proteasome core is composed of 28 subunits that are arranged in four stacked rings, resulting in a barrel-shaped structure. The two end rings are each formed by seven alpha subunits, and the two central rings are each formed by seven beta subunits. The catalytic chamber with the active sites is on the inside of the barrel.

The protein localises to the cytoplasm. It is found in the nucleus. The proteasome is a multicatalytic proteinase complex which is characterized by its ability to cleave peptides with Arg, Phe, Tyr, Leu, and Glu adjacent to the leaving group at neutral or slightly basic pH. The proteasome has an ATP-dependent proteolytic activity. This Caenorhabditis elegans protein is Proteasome subunit alpha type-5 (pas-5).